An 867-amino-acid chain; its full sequence is MDNPQALPLFLLLASLVGILTLRASSGLQQTNFSSAFSSDSKSSSQGLGVEVPSIKPPSWKVPDQFLDSKASAGISDSSWFPEALSSNMSGSFWSNVSAEGQDLSPVSPFSETPGSEVFPDISDPQVPAKDPKPSFTVKTPASNISTQVSHTKLSVEAPDSKFSPDDMDLKLSAQSPESKFSAETHSAASFPQQVGGPLAVLVGTTIRLPLVPIPNPGPPTSLVVWRRGSKVLAAGGLGPGAPLISLDPAHRDHLRFDQARGVLELASAQLDDAGVYTAEVIRAGVSQQTHEFTVGVYEPLPQLSVQPKAPETEEGAAELRLRCLGWGPGRGELSWSRDGRALEAAESEGAETPRMRSEGDQLLIVRPVRSDHARYTCRVRSPFGHREAAADVSVFYGPDPPTITVSSDRDAAPARFVTAGSNVTLRCAAASRPPADITWSLADPAEAAVPAGSRLLLPAVGPGHAGTYACLAANPRTGRRRRSLLNLTVADLPPGAPQCSVEGGPGDRSLRFRCSWPGGAPAASLQFQGLPEGIRAGPVSSVLLAAVPAHPRLSGVPITCLARHLVATRTCTVTPEAPREVLLHPLVAETRLGEAEVALEASGCPPPSRASWAREGRPLAPGGGSRLRLSQDGRKLHIGNFSLDWDLGNYSVLCSGALGAGGDQITLIGPSISSWRLQRARDAAVLTWDVERGALISSFEIQAWPDGPALGRTSTYRDWVSLLILGPQERSAVVPLPPRNPGTWTFRILPILGGQPGTPSQSRVYRAGPTLSHGAIAGIVLGSLLGLALLAVLLLLCICCLCRFRGKTPEKKKHPSTLVPVVTPSEKKMHSVTPVEISWPLDLKVPLEDHSSTRAYQAQTPVQLSL.

An N-terminal signal peptide occupies residues 1–27; that stretch reads MDNPQALPLFLLLASLVGILTLRASSG. Over 28–776 the chain is Extracellular; it reads LQQTNFSSAF…RAGPTLSHGA (749 aa). Residue Asn32 is glycosylated (N-linked (GlcNAc...) asparagine). The span at 35–45 shows a compositional bias: low complexity; that stretch reads SAFSSDSKSSS. A disordered region spans residues 35–60; that stretch reads SAFSSDSKSSSQGLGVEVPSIKPPSW. Residues Asn88, Asn96, and Asn144 are each glycosylated (N-linked (GlcNAc...) asparagine). The segment at 104-186 is disordered; sequence LSPVSPFSET…PESKFSAETH (83 aa). The span at 137–153 shows a compositional bias: polar residues; the sequence is TVKTPASNISTQVSHTK. Residues 159 to 170 are compositionally biased toward basic and acidic residues; the sequence is PDSKFSPDDMDL. Positions 173–186 are enriched in polar residues; the sequence is SAQSPESKFSAETH. Ig-like C2-type domains follow at residues 302–394 and 402–487; these read PQLS…ADVS and PTIT…SLLN. Residues Cys324 and Cys378 are joined by a disulfide bond. N-linked (GlcNAc...) asparagine glycosylation occurs at Asn423. Cys428 and Cys471 are oxidised to a cystine. The N-linked (GlcNAc...) asparagine glycan is linked to Asn487. A disordered region spans residues 602–627; that stretch reads ASGCPPPSRASWAREGRPLAPGGGSR. Residues Asn641 and Asn650 are each glycosylated (N-linked (GlcNAc...) asparagine). Residues 777–797 form a helical membrane-spanning segment; that stretch reads IAGIVLGSLLGLALLAVLLLL. The Cytoplasmic portion of the chain corresponds to 798 to 867; it reads CICCLCRFRG…QAQTPVQLSL (70 aa).

Expressed in the esophagus, particularly in the suprabasilar layers of the epithelium. Expression is largely reduced in esophageal metaplasia, dysplasia, and adenocarcinoma lesions.

It localises to the membrane. The protein is V-set and immunoglobulin domain-containing protein 10-like (VSIG10L) of Homo sapiens (Human).